Reading from the N-terminus, the 213-residue chain is Kynurenine formamidase (213 aa).

Trp20 contributes to the substrate binding site. Zn(2+) is bound by residues His50, His54, and Asp56. The active-site Proton donor/acceptor is the His60. His161 and Glu173 together coordinate Zn(2+).

The protein belongs to the Cyclase 1 superfamily. KynB family. In terms of assembly, homodimer. Zn(2+) is required as a cofactor.

It catalyses the reaction N-formyl-L-kynurenine + H2O = L-kynurenine + formate + H(+). It participates in amino-acid degradation; L-tryptophan degradation via kynurenine pathway; L-kynurenine from L-tryptophan: step 2/2. Catalyzes the hydrolysis of N-formyl-L-kynurenine to L-kynurenine, the second step in the kynurenine pathway of tryptophan degradation. The chain is Kynurenine formamidase from Pseudomonas paraeruginosa (strain DSM 24068 / PA7) (Pseudomonas aeruginosa (strain PA7)).